We begin with the raw amino-acid sequence, 148 residues long: UPF0179 protein VNG_1401C (148 aa).

The protein belongs to the UPF0179 family.

This is UPF0179 protein VNG_1401C from Halobacterium salinarum (strain ATCC 700922 / JCM 11081 / NRC-1) (Halobacterium halobium).